Here is a 310-residue protein sequence, read N- to C-terminus: Porphobilinogen deaminase (310 aa).

At cysteine 242 the chain carries S-(dipyrrolylmethanemethyl)cysteine.

It belongs to the HMBS family. As to quaternary structure, monomer. It depends on dipyrromethane as a cofactor.

It catalyses the reaction 4 porphobilinogen + H2O = hydroxymethylbilane + 4 NH4(+). The protein operates within porphyrin-containing compound metabolism; protoporphyrin-IX biosynthesis; coproporphyrinogen-III from 5-aminolevulinate: step 2/4. Functionally, tetrapolymerization of the monopyrrole PBG into the hydroxymethylbilane pre-uroporphyrinogen in several discrete steps. The polypeptide is Porphobilinogen deaminase (Shewanella halifaxensis (strain HAW-EB4)).